Here is an 87-residue protein sequence, read N- to C-terminus: RNA-binding protein Hfq (87 aa).

Residues 9–68 enclose the Sm domain; it reads DPFLNALRRERIPVSIFLVNGIKLQGKIQSFDQFVILLENTVNQMVYKHAISTVVPARAV.

This sequence belongs to the Hfq family. In terms of assembly, homohexamer.

Functionally, RNA chaperone that binds small regulatory RNA (sRNAs) and mRNAs to facilitate mRNA translational regulation in response to envelope stress, environmental stress and changes in metabolite concentrations. Also binds with high specificity to tRNAs. The chain is RNA-binding protein Hfq from Pseudoalteromonas translucida (strain TAC 125).